We begin with the raw amino-acid sequence, 98 residues long: Phosphoribosyl-ATP pyrophosphatase (98 aa).

The protein belongs to the PRA-PH family.

It localises to the cytoplasm. The enzyme catalyses 1-(5-phospho-beta-D-ribosyl)-ATP + H2O = 1-(5-phospho-beta-D-ribosyl)-5'-AMP + diphosphate + H(+). It participates in amino-acid biosynthesis; L-histidine biosynthesis; L-histidine from 5-phospho-alpha-D-ribose 1-diphosphate: step 2/9. The protein is Phosphoribosyl-ATP pyrophosphatase of Pelotomaculum thermopropionicum (strain DSM 13744 / JCM 10971 / SI).